A 422-amino-acid polypeptide reads, in one-letter code: Probable protein phosphatase 2C 43 (422 aa).

Residues 117–393 (SSGSYADKGD…DNVTVVVICF (277 aa)) form the PPM-type phosphatase domain. Mn(2+) contacts are provided by Asp-163, Gly-164, Asp-341, and Asp-384.

The protein belongs to the PP2C family. It depends on Mg(2+) as a cofactor. Mn(2+) is required as a cofactor.

The enzyme catalyses O-phospho-L-seryl-[protein] + H2O = L-seryl-[protein] + phosphate. It catalyses the reaction O-phospho-L-threonyl-[protein] + H2O = L-threonyl-[protein] + phosphate. The polypeptide is Probable protein phosphatase 2C 43 (Arabidopsis thaliana (Mouse-ear cress)).